Reading from the N-terminus, the 386-residue chain is Short integuments 2, mitochondrial (386 aa).

The 171-residue stretch at 37–207 folds into the CP-type G domain; it reads TRAIRNRLKL…VLDSPGVLVP (171 aa). The DARXP motif signature appears at 55 to 59; the sequence is DARIP. The tract at residues 81 to 84 is G4; that stretch reads NKKD. GTP is bound by residues 81 to 84, 109 to 110, and 146 to 151; these read NKKD, NA, and NVGKSA. The segment at 109–111 is G5; it reads NAH. The interval 143–150 is G1; it reads GVPNVGKS. The G2 stretch occupies residues 180–184; sequence GVTQD. The interval 200–203 is G3; it reads DSPG. Glycine 203 contributes to the GTP binding site.

It belongs to the TRAFAC class YlqF/YawG GTPase family. MTG1 subfamily. In terms of tissue distribution, expressed in seedlings, roots, leaves, stems, inflorescences and siliques.

The protein localises to the mitochondrion. Functionally, GTPase that may function in mitochondrial ribosome assembly. Involved in a variety of growth processes during vegetative development and promotes growth and cell division in the developing integuments. This Arabidopsis thaliana (Mouse-ear cress) protein is Short integuments 2, mitochondrial.